The following is a 358-amino-acid chain: DNA primase large subunit PriL (358 aa).

C234, C306, C315, and C322 together coordinate [4Fe-4S] cluster. A disordered region spans residues 335 to 358 (KLDDTDEEELVDWREDEGEEEADA). Over residues 338–358 (DTDEEELVDWREDEGEEEADA) the composition is skewed to acidic residues.

The protein belongs to the eukaryotic-type primase large subunit family. Heterodimer of a small subunit (PriS) and a large subunit (PriL). [4Fe-4S] cluster is required as a cofactor.

Regulatory subunit of DNA primase, an RNA polymerase that catalyzes the synthesis of short RNA molecules used as primers for DNA polymerase during DNA replication. Stabilizes and modulates the activity of the small subunit, increasing the rate of DNA synthesis, and conferring RNA synthesis capability. The DNA polymerase activity may enable DNA primase to also catalyze primer extension after primer synthesis. May also play a role in DNA repair. This chain is DNA primase large subunit PriL, found in Haloarcula marismortui (strain ATCC 43049 / DSM 3752 / JCM 8966 / VKM B-1809) (Halobacterium marismortui).